The chain runs to 328 residues: uncharacterized protein (328 aa).

The tract at residues 296–328 (APEGDLEDEIIEVDPEQPRDDPYRRLRTPPPGG) is disordered. A compositionally biased stretch (acidic residues) spans 299 to 310 (GDLEDEIIEVDP).

Its function is as follows. Possibly necessary for replication. This is an uncharacterized protein from Halobacterium sp. (strain GN101).